The chain runs to 154 residues: 6,7-dimethyl-8-ribityllumazine synthase (154 aa).

5-amino-6-(D-ribitylamino)uracil-binding positions include Phe21, 55-57 (AFE), and 79-81 (CVI). Residue 84-85 (AT) coordinates (2S)-2-hydroxy-3-oxobutyl phosphate. His87 serves as the catalytic Proton donor. 5-amino-6-(D-ribitylamino)uracil is bound at residue Phe112. Arg126 contacts (2S)-2-hydroxy-3-oxobutyl phosphate.

It belongs to the DMRL synthase family. Forms an icosahedral capsid composed of 60 subunits, arranged as a dodecamer of pentamers.

The catalysed reaction is (2S)-2-hydroxy-3-oxobutyl phosphate + 5-amino-6-(D-ribitylamino)uracil = 6,7-dimethyl-8-(1-D-ribityl)lumazine + phosphate + 2 H2O + H(+). It functions in the pathway cofactor biosynthesis; riboflavin biosynthesis; riboflavin from 2-hydroxy-3-oxobutyl phosphate and 5-amino-6-(D-ribitylamino)uracil: step 1/2. Catalyzes the formation of 6,7-dimethyl-8-ribityllumazine by condensation of 5-amino-6-(D-ribitylamino)uracil with 3,4-dihydroxy-2-butanone 4-phosphate. This is the penultimate step in the biosynthesis of riboflavin. The sequence is that of 6,7-dimethyl-8-ribityllumazine synthase from Staphylococcus aureus (strain Mu50 / ATCC 700699).